Here is a 66-residue protein sequence, read N- to C-terminus: Delta-buthitoxin-Hj1a (66 aa).

Positions 4–66 (RDAYIAQPHN…EPIKVPGKCH (63 aa)) constitute an LCN-type CS-alpha/beta domain. 4 cysteine pairs are disulfide-bonded: Cys-14–Cys-65, Cys-18–Cys-38, Cys-24–Cys-48, and Cys-28–Cys-50.

This sequence belongs to the long (4 C-C) scorpion toxin superfamily. Sodium channel inhibitor family. Alpha subfamily. In terms of tissue distribution, expressed by the venom gland.

The protein resides in the secreted. Its function is as follows. This recombinant toxin slows fast inactivation on Nav1.1/SCN1A (EC(50)=17 nM), Nav1.4/SN4A (EC(50)=7.5 nM), Nav1.5/SCN5A (EC(50)=9.2 nM) and Nav1.6/SCN8A (EC(50)=37.3 nM) voltage-gated sodium channels. On Nav1.1/SCN1A channel, it acts as an agonist by inducing a shift in both the voltage dependence of channel inactivation (alpha-toxin activity) and activation (beta-toxin activity). In vivo, shows moderate insecticidal activities. It induces irreversible paralysis in blowflies and lethal effects in D.melanogaster. The chain is Delta-buthitoxin-Hj1a from Hottentotta judaicus (Black scorpion).